The sequence spans 1237 residues: GTPase activating protein BUD2 (1237 aa).

Residues 79-110 (GSGKSSISQPPPTTSTRRNLLRKSSNLNSSDQ) are compositionally biased toward low complexity. The tract at residues 79 to 124 (GSGKSSISQPPPTTSTRRNLLRKSSNLNSSDQSHSKSSEDNEHQPP) is disordered. Basic and acidic residues predominate over residues 111 to 121 (SHSKSSEDNEH). The C2 domain maps to 381–503 (NVEHPQLYDF…KQIKTTSTIM (123 aa)). A Ras-GAP domain is found at 637–905 (NSQDQAVSNS…PEIYDYFDKL (269 aa)). Disordered regions lie at residues 721 to 762 (SIHE…ERER) and 969 to 1007 (NNNG…PDLD). Positions 735–754 (DVSDDDDDDDDNSSDDDADY) are enriched in acidic residues. The segment covering 986 to 996 (RDMEREQDRSR) has biased composition (basic and acidic residues). Residues 1065-1093 (NITLKDIQKQSTKIMNKIQELEIYLENYE) adopt a coiled-coil conformation. The segment at 1170–1204 (NGGMGNRNGHDVNGHNNNNNNNNNNTGDGYNETDR) is disordered. A compositionally biased stretch (low complexity) spans 1183 to 1199 (GHNNNNNNNNNNTGDGY).

It is found in the cytoplasm. The protein resides in the cell cortex. The protein localises to the cell tip. It localises to the cell septum. Its function is as follows. GTPase activating protein (GAP) for RSR1 which is involved in the polarization of yeast and hyphal cells. Directs the site of new daughter cell growth in yeast and hyphal cells. Important for hyphae to maintain linear growth and necessary for hyphal responses to directional cues in the environment (tropisms). Required for correct localization of the septin rings and stabilization of the polarisome at hyphal tips. Involved in cell adhesion. The chain is GTPase activating protein BUD2 (BUD2) from Candida albicans (strain SC5314 / ATCC MYA-2876) (Yeast).